Consider the following 288-residue polypeptide: 4-diphosphocytidyl-2-C-methyl-D-erythritol kinase (288 aa).

Residue Lys22 is part of the active site. 104 to 114 lines the ATP pocket; it reads PSQAGLGGGSS. Residue Asp146 is part of the active site.

It belongs to the GHMP kinase family. IspE subfamily.

The enzyme catalyses 4-CDP-2-C-methyl-D-erythritol + ATP = 4-CDP-2-C-methyl-D-erythritol 2-phosphate + ADP + H(+). It functions in the pathway isoprenoid biosynthesis; isopentenyl diphosphate biosynthesis via DXP pathway; isopentenyl diphosphate from 1-deoxy-D-xylulose 5-phosphate: step 3/6. Functionally, catalyzes the phosphorylation of the position 2 hydroxy group of 4-diphosphocytidyl-2C-methyl-D-erythritol. The protein is 4-diphosphocytidyl-2-C-methyl-D-erythritol kinase of Protochlamydia amoebophila (strain UWE25).